A 676-amino-acid polypeptide reads, in one-letter code: Methionine--tRNA ligase (676 aa).

The 'HIGH' region signature appears at 15–25; it reads PYANGPIHLGH. Residues Cys-146, Cys-149, Cys-159, and Cys-162 each contribute to the Zn(2+) site. A 'KMSKS' region motif is present at residues 332 to 336; it reads KMSKS. Lys-335 contacts ATP. Residues 575-676 form the tRNA-binding domain; that stretch reads DFAKIDLRIA…EGAQPGMRVK (102 aa).

It belongs to the class-I aminoacyl-tRNA synthetase family. MetG type 1 subfamily. Homodimer. Requires Zn(2+) as cofactor.

It localises to the cytoplasm. It catalyses the reaction tRNA(Met) + L-methionine + ATP = L-methionyl-tRNA(Met) + AMP + diphosphate. Its function is as follows. Is required not only for elongation of protein synthesis but also for the initiation of all mRNA translation through initiator tRNA(fMet) aminoacylation. This is Methionine--tRNA ligase from Shewanella sp. (strain ANA-3).